Reading from the N-terminus, the 362-residue chain is 3-dehydroquinate synthase (362 aa).

Residues Asp70–Lys75, Gly104–Asp108, Thr128–Thr129, Lys141, and Lys150 contribute to the NAD(+) site. 3 residues coordinate Zn(2+): Glu183, His246, and His263.

The protein belongs to the sugar phosphate cyclases superfamily. Dehydroquinate synthase family. NAD(+) is required as a cofactor. It depends on Co(2+) as a cofactor. Zn(2+) serves as cofactor.

The protein resides in the cytoplasm. It catalyses the reaction 7-phospho-2-dehydro-3-deoxy-D-arabino-heptonate = 3-dehydroquinate + phosphate. It participates in metabolic intermediate biosynthesis; chorismate biosynthesis; chorismate from D-erythrose 4-phosphate and phosphoenolpyruvate: step 2/7. Functionally, catalyzes the conversion of 3-deoxy-D-arabino-heptulosonate 7-phosphate (DAHP) to dehydroquinate (DHQ). This Pasteurella multocida (strain Pm70) protein is 3-dehydroquinate synthase.